Reading from the N-terminus, the 435-residue chain is Methylenetetrahydrofolate--tRNA-(uracil-5-)-methyltransferase TrmFO (435 aa).

Residue glycine 10–glycine 15 participates in FAD binding.

Belongs to the MnmG family. TrmFO subfamily. The cofactor is FAD.

It is found in the cytoplasm. The catalysed reaction is uridine(54) in tRNA + (6R)-5,10-methylene-5,6,7,8-tetrahydrofolate + NADH + H(+) = 5-methyluridine(54) in tRNA + (6S)-5,6,7,8-tetrahydrofolate + NAD(+). It catalyses the reaction uridine(54) in tRNA + (6R)-5,10-methylene-5,6,7,8-tetrahydrofolate + NADPH + H(+) = 5-methyluridine(54) in tRNA + (6S)-5,6,7,8-tetrahydrofolate + NADP(+). Functionally, catalyzes the folate-dependent formation of 5-methyl-uridine at position 54 (M-5-U54) in all tRNAs. This is Methylenetetrahydrofolate--tRNA-(uracil-5-)-methyltransferase TrmFO from Halalkalibacterium halodurans (strain ATCC BAA-125 / DSM 18197 / FERM 7344 / JCM 9153 / C-125) (Bacillus halodurans).